The following is a 318-amino-acid chain: MIVVTGGAGFIGSNLVKQLNAQGRTDVVVIDDLTDGTKFVNLVDLTIADYMDKDEFQARIVSGDEFEEWDGGIEVIFHEGACSATTEWNGKFIMEVNYEYSKDLFHYCIEREIPFIYASSAATYGGRNDNFIEDPKFEQPLNVYGYSKQLFDQYVRRWMPEINSQVVGLKYFNVYGPREQHKGSMASVAFHLNTQVKKGENPKLFEGCDGFPNGGQMRDFIYVDDVCKVNLWFWLNPQHSGIFNCGTGRAEPFQNVAEAVIKHHQKGAIEYIPFPDHLKGRYQSFTQADMTKLRGVGYDAEFKTVAEGVADYMAWLNR.

NADP(+) contacts are provided by residues 10–11, 31–32, lysine 38, lysine 53, and 79–83; these read FI, DD, and EGACS. Tyrosine 144 acts as the Proton acceptor in catalysis. Lysine 148 is an NADP(+) binding site. Asparagine 173 serves as a coordination point for substrate. NADP(+)-binding residues include valine 174 and lysine 182. Lysine 182 functions as the Proton acceptor in the catalytic mechanism. Substrate is bound by residues serine 184, histidine 191, 205-208, arginine 218, and tyrosine 282; that span reads FEGC.

It belongs to the NAD(P)-dependent epimerase/dehydratase family. HldD subfamily. As to quaternary structure, homopentamer. NADP(+) serves as cofactor.

It catalyses the reaction ADP-D-glycero-beta-D-manno-heptose = ADP-L-glycero-beta-D-manno-heptose. The protein operates within nucleotide-sugar biosynthesis; ADP-L-glycero-beta-D-manno-heptose biosynthesis; ADP-L-glycero-beta-D-manno-heptose from D-glycero-beta-D-manno-heptose 7-phosphate: step 4/4. Catalyzes the interconversion between ADP-D-glycero-beta-D-manno-heptose and ADP-L-glycero-beta-D-manno-heptose via an epimerization at carbon 6 of the heptose. This is ADP-L-glycero-D-manno-heptose-6-epimerase from Aeromonas hydrophila subsp. hydrophila (strain ATCC 7966 / DSM 30187 / BCRC 13018 / CCUG 14551 / JCM 1027 / KCTC 2358 / NCIMB 9240 / NCTC 8049).